Reading from the N-terminus, the 236-residue chain is Small ribosomal subunit protein uS2c (236 aa).

This sequence belongs to the universal ribosomal protein uS2 family.

Its subcellular location is the plastid. The protein resides in the chloroplast. This chain is Small ribosomal subunit protein uS2c (rps2), found in Calycanthus floridus var. glaucus (Eastern sweetshrub).